We begin with the raw amino-acid sequence, 30 residues long: V-type proton ATPase catalytic subunit A isoform 2 (30 aa).

This sequence belongs to the ATPase alpha/beta chains family. As to quaternary structure, V-ATPase is a heteromultimeric enzyme composed of a peripheral catalytic V1 complex (main components: subunits A, B, C, D, E, and F) attached to an integral membrane V0 proton pore complex (main component: the proteolipid protein).

The enzyme catalyses ATP + H2O + 4 H(+)(in) = ADP + phosphate + 5 H(+)(out). Catalytic subunit of the peripheral V1 complex of vacuolar ATPase. V-ATPase vacuolar ATPase is responsible for acidifying a variety of intracellular compartments in eukaryotic cells. In Equisetum arvense (Field horsetail), this protein is V-type proton ATPase catalytic subunit A isoform 2.